Consider the following 288-residue polypeptide: Homoserine kinase (288 aa).

79-89 (PLARGLGSSSS) is an ATP binding site.

It belongs to the GHMP kinase family. Homoserine kinase subfamily.

It is found in the cytoplasm. The enzyme catalyses L-homoserine + ATP = O-phospho-L-homoserine + ADP + H(+). Its pathway is amino-acid biosynthesis; L-threonine biosynthesis; L-threonine from L-aspartate: step 4/5. In terms of biological role, catalyzes the ATP-dependent phosphorylation of L-homoserine to L-homoserine phosphate. This is Homoserine kinase from Streptococcus gordonii (strain Challis / ATCC 35105 / BCRC 15272 / CH1 / DL1 / V288).